The chain runs to 487 residues: Photosystem II CP43 reaction center protein (487 aa).

Residues 1 to 28 (MKVFVLGWLLKINLMKTLYSQRRFYHVE) constitute a propeptide that is removed on maturation. Transmembrane regions (helical) follow at residues 83-107 (LFEVAHFVPEKPLYEQGLILIPHLA), 148-169 (LIGPDTLEESFPFFGYDWRDKN), 192-214 (KSLFVGGVYDTWAPGGGDVRFVS), 269-289 (KPFAWARRAFVWSGEAYLSYS), and 305-326 (WYNNTAYPSEFYGPTGPEASQA). Position 381 (Glu381) interacts with [CaMn4O5] cluster. Residues 461–485 (RARAAAAGFEKGINRENEPVLSMRP) form a helical membrane-spanning segment.

It belongs to the PsbB/PsbC family. PsbC subfamily. In terms of assembly, PSII is composed of 1 copy each of membrane proteins PsbA, PsbB, PsbC, PsbD, PsbE, PsbF, PsbH, PsbI, PsbJ, PsbK, PsbL, PsbM, PsbT, PsbX, PsbY, PsbZ, Psb30/Ycf12, at least 3 peripheral proteins of the oxygen-evolving complex and a large number of cofactors. It forms dimeric complexes. The cofactor is Binds multiple chlorophylls and provides some of the ligands for the Ca-4Mn-5O cluster of the oxygen-evolving complex. It may also provide a ligand for a Cl- that is required for oxygen evolution. PSII binds additional chlorophylls, carotenoids and specific lipids..

The protein localises to the plastid. It is found in the chloroplast thylakoid membrane. One of the components of the core complex of photosystem II (PSII). It binds chlorophyll and helps catalyze the primary light-induced photochemical processes of PSII. PSII is a light-driven water:plastoquinone oxidoreductase, using light energy to abstract electrons from H(2)O, generating O(2) and a proton gradient subsequently used for ATP formation. The chain is Photosystem II CP43 reaction center protein from Porphyra purpurea (Red seaweed).